Here is a 101-residue protein sequence, read N- to C-terminus: Ubiquitin-related modifier 1 (101 aa).

Residue glycine 101 is modified to 1-thioglycine. A Glycyl lysine isopeptide (Gly-Lys) (interchain with K-? in acceptor proteins) cross-link involves residue glycine 101.

Belongs to the URM1 family. As to quaternary structure, component of a complex at least composed of URM1, CTU2/NCS2 and CTU1/ATPBD3. Post-translationally, C-terminal thiocarboxylation occurs in 2 steps, it is first acyl-adenylated (-COAMP) via the hesA/moeB/thiF part of MOCS3, then thiocarboxylated (-COSH) via the rhodanese domain of MOCS3.

It is found in the cytoplasm. It functions in the pathway tRNA modification; 5-methoxycarbonylmethyl-2-thiouridine-tRNA biosynthesis. Its function is as follows. Acts as a sulfur carrier required for 2-thiolation of mcm(5)S(2)U at tRNA wobble positions of cytosolic tRNA(Lys), tRNA(Glu) and tRNA(Gln). Serves as sulfur donor in tRNA 2-thiolation reaction by being thiocarboxylated (-COSH) at its C-terminus by MOCS3. The sulfur is then transferred to tRNA to form 2-thiolation of mcm(5)S(2)U. Also acts as a ubiquitin-like protein (UBL) that is covalently conjugated via an isopeptide bond to lysine residues of target proteins such as MOCS3, ATPBD3, CTU2, USP15 and CAS. The thiocarboxylated form serves as substrate for conjugation and oxidative stress specifically induces the formation of UBL-protein conjugates. In Homo sapiens (Human), this protein is Ubiquitin-related modifier 1.